A 321-amino-acid polypeptide reads, in one-letter code: Chemotaxis protein CheV1 (321 aa).

In terms of domain architecture, CheW-like spans 19 to 177; it reads ELQLLCFRLG…IEKMLIDVFP (159 aa). A Response regulatory domain is found at 198–319; sequence CVLLADDSPS…IQRVVKQFLE (122 aa). Aspartate 252 bears the 4-aspartylphosphate mark.

In terms of biological role, plays an essential role in chemotaxis signal transduction system in order to colonize the host stomach. May act as a phosphate sink to control the flow of phosphate to CheAY. This is Chemotaxis protein CheV1 from Helicobacter pylori (strain ATCC 700392 / 26695) (Campylobacter pylori).